The sequence spans 476 residues: Cysteine--tRNA ligase (476 aa).

Residue C29 participates in Zn(2+) binding. The short motif at 31-41 (PTVYDYPHLGH) is the 'HIGH' region element. Zn(2+) is bound by residues C209, H234, and E238. A 'KMSKS' region motif is present at residues 266-270 (KMSKS). K269 provides a ligand contact to ATP.

The protein belongs to the class-I aminoacyl-tRNA synthetase family. Zn(2+) serves as cofactor.

The protein resides in the cytoplasm. It carries out the reaction tRNA(Cys) + L-cysteine + ATP = L-cysteinyl-tRNA(Cys) + AMP + diphosphate. This Thermococcus gammatolerans (strain DSM 15229 / JCM 11827 / EJ3) protein is Cysteine--tRNA ligase.